We begin with the raw amino-acid sequence, 289 residues long: Shikimate kinase (289 aa).

84 to 94 is a binding site for ATP; sequence PVASGLSSSSA.

It belongs to the GHMP kinase family. Archaeal shikimate kinase subfamily.

The protein localises to the cytoplasm. It carries out the reaction shikimate + ATP = 3-phosphoshikimate + ADP + H(+). It functions in the pathway metabolic intermediate biosynthesis; chorismate biosynthesis; chorismate from D-erythrose 4-phosphate and phosphoenolpyruvate: step 5/7. The sequence is that of Shikimate kinase (aroK) from Methanothermobacter thermautotrophicus (strain ATCC 29096 / DSM 1053 / JCM 10044 / NBRC 100330 / Delta H) (Methanobacterium thermoautotrophicum).